Here is a 447-residue protein sequence, read N- to C-terminus: tRNA (guanine(37)-N(1))-methyltransferase (447 aa).

S-adenosyl-L-methionine contacts are provided by residues histidine 241, 285–286 (DL), and 313–314 (DV).

Belongs to the class I-like SAM-binding methyltransferase superfamily. TRM5/TYW2 family. As to quaternary structure, monomer.

It localises to the mitochondrion matrix. The protein resides in the nucleus. It is found in the cytoplasm. It carries out the reaction guanosine(37) in tRNA + S-adenosyl-L-methionine = N(1)-methylguanosine(37) in tRNA + S-adenosyl-L-homocysteine + H(+). In terms of biological role, specifically methylates the N1 position of guanosine-37 in various cytoplasmic and mitochondrial tRNAs. Methylation is not dependent on the nature of the nucleoside 5' of the target nucleoside. This is the first step in the biosynthesis of wybutosine (yW), a modified base adjacent to the anticodon of tRNAs and required for accurate decoding. The protein is tRNA (guanine(37)-N(1))-methyltransferase of Giardia intestinalis (strain ATCC 50803 / WB clone C6) (Giardia lamblia).